The following is a 333-amino-acid chain: DNA-directed RNA polymerase subunit alpha (333 aa).

Residues 1–246 form an alpha N-terminal domain (alpha-NTD) region; the sequence is MKKMVQIKYK…AHLQVIGDVK (246 aa). The tract at residues 262-333 is alpha C-terminal domain (alpha-CTD); that stretch reads VEPSIHSVDI…YNVTLNRGEK (72 aa).

Belongs to the RNA polymerase alpha chain family. In terms of assembly, homodimer. The RNAP catalytic core consists of 2 alpha, 1 beta, 1 beta' and 1 omega subunit. When a sigma factor is associated with the core the holoenzyme is formed, which can initiate transcription.

The catalysed reaction is RNA(n) + a ribonucleoside 5'-triphosphate = RNA(n+1) + diphosphate. Its function is as follows. DNA-dependent RNA polymerase catalyzes the transcription of DNA into RNA using the four ribonucleoside triphosphates as substrates. In Mycoplasmopsis pulmonis (strain UAB CTIP) (Mycoplasma pulmonis), this protein is DNA-directed RNA polymerase subunit alpha.